The primary structure comprises 968 residues: Glycine dehydrogenase (decarboxylating) (968 aa).

Position 713 is an N6-(pyridoxal phosphate)lysine (K713).

This sequence belongs to the GcvP family. As to quaternary structure, the glycine cleavage system is composed of four proteins: P, T, L and H. Pyridoxal 5'-phosphate is required as a cofactor.

It carries out the reaction N(6)-[(R)-lipoyl]-L-lysyl-[glycine-cleavage complex H protein] + glycine + H(+) = N(6)-[(R)-S(8)-aminomethyldihydrolipoyl]-L-lysyl-[glycine-cleavage complex H protein] + CO2. In terms of biological role, the glycine cleavage system catalyzes the degradation of glycine. The P protein binds the alpha-amino group of glycine through its pyridoxal phosphate cofactor; CO(2) is released and the remaining methylamine moiety is then transferred to the lipoamide cofactor of the H protein. The sequence is that of Glycine dehydrogenase (decarboxylating) from Variovorax paradoxus (strain S110).